Reading from the N-terminus, the 303-residue chain is Protoheme IX farnesyltransferase 1 (303 aa).

Transmembrane regions (helical) follow at residues 18-38 (PGII…AAQG), 42-62 (LTLM…GCAV), 91-111 (AVLS…AIFT), 114-134 (LAVL…SLYM), 139-159 (VYGT…GYCA), 169-189 (VILL…IAIF), 213-233 (LHIV…PLAG), 235-255 (TGIA…AMAL), and 274-294 (FSII…QVVA).

Belongs to the UbiA prenyltransferase family. Protoheme IX farnesyltransferase subfamily.

The protein resides in the cell inner membrane. The catalysed reaction is heme b + (2E,6E)-farnesyl diphosphate + H2O = Fe(II)-heme o + diphosphate. The protein operates within porphyrin-containing compound metabolism; heme O biosynthesis; heme O from protoheme: step 1/1. In terms of biological role, converts heme B (protoheme IX) to heme O by substitution of the vinyl group on carbon 2 of heme B porphyrin ring with a hydroxyethyl farnesyl side group. The chain is Protoheme IX farnesyltransferase 1 from Shewanella frigidimarina (strain NCIMB 400).